Consider the following 315-residue polypeptide: Methionyl-tRNA formyltransferase (315 aa).

(6S)-5,6,7,8-tetrahydrofolate is bound at residue 113-116 (SLLP).

This sequence belongs to the Fmt family.

It catalyses the reaction L-methionyl-tRNA(fMet) + (6R)-10-formyltetrahydrofolate = N-formyl-L-methionyl-tRNA(fMet) + (6S)-5,6,7,8-tetrahydrofolate + H(+). In terms of biological role, attaches a formyl group to the free amino group of methionyl-tRNA(fMet). The formyl group appears to play a dual role in the initiator identity of N-formylmethionyl-tRNA by promoting its recognition by IF2 and preventing the misappropriation of this tRNA by the elongation apparatus. This is Methionyl-tRNA formyltransferase from Enterobacter sp. (strain 638).